The following is a 423-amino-acid chain: Adenylosuccinate synthetase (423 aa).

GTP-binding positions include 12-18 (GDEGKGK) and 40-42 (GHT). Residue D13 is the Proton acceptor of the active site. 2 residues coordinate Mg(2+): D13 and G40. Residues 13-16 (DEGK), 38-41 (NAGH), T129, R143, Q221, T236, and R300 each bind IMP. Residue H41 is the Proton donor of the active site. 296 to 302 (AVTGRER) contacts substrate. GTP contacts are provided by residues R302, 328-330 (KSD), and 408-410 (SVG).

Belongs to the adenylosuccinate synthetase family. As to quaternary structure, homodimer. Mg(2+) serves as cofactor.

The protein resides in the cytoplasm. The catalysed reaction is IMP + L-aspartate + GTP = N(6)-(1,2-dicarboxyethyl)-AMP + GDP + phosphate + 2 H(+). The protein operates within purine metabolism; AMP biosynthesis via de novo pathway; AMP from IMP: step 1/2. Functionally, plays an important role in the de novo pathway of purine nucleotide biosynthesis. Catalyzes the first committed step in the biosynthesis of AMP from IMP. In Phocaeicola vulgatus (strain ATCC 8482 / DSM 1447 / JCM 5826 / CCUG 4940 / NBRC 14291 / NCTC 11154) (Bacteroides vulgatus), this protein is Adenylosuccinate synthetase.